A 516-amino-acid chain; its full sequence is Radial spoke head protein 3 homolog A (516 aa).

Disordered stretches follow at residues 1 to 45 (MAAT…GNPA), 120 to 139 (STLN…AEAS), and 190 to 233 (PTGQ…PVEG). The span at 12–25 (AKKRPLHQRARRPA) shows a compositional bias: basic residues. The span at 120-129 (STLNQASAMT) shows a compositional bias: polar residues. Residues 208-217 (QARRRALARK) are compositionally biased toward basic residues. Residues 218-233 (RAQEQLKPRTPEPVEG) are compositionally biased toward basic and acidic residues. The residue at position 270 (T270) is a Phosphothreonine; by MAPK1. The stretch at 333 to 369 (YEEIRNVELAEVQRLEEQERRHREEKERRKKQQWEIV) forms a coiled coil. The interval 459-516 (EAMPPGQKTNVINGPNTVTDPSVTTLHTQKPVLDRVSSQPAPSQERKPVEEGGHLMAE) is disordered. Residues 465 to 486 (QKTNVINGPNTVTDPSVTTLHT) are compositionally biased toward polar residues. Residues 502 to 516 (QERKPVEEGGHLMAE) show a composition bias toward basic and acidic residues.

The protein belongs to the flagellar radial spoke RSP3 family. May be a component of axonemal radial spokes. Interacts with IQUB. Interacts with phosphorylated MAPK1. Interacts with MEK1. Interacts with PKA regulatory subunits PRKAR1A and PRKAR1B. Interacts with RSPH1. Interacts with RSPH4A. Interacts with RSPH6A. Interacts with RSPH9. Interacts with CFAP61. Interacts with LRRC23.

It localises to the cytoplasm. It is found in the cytoskeleton. The protein resides in the cilium axoneme. The protein localises to the flagellum axoneme. Functionally, may function as part of axonemal radial spoke complexes that play an important part in the motility of sperm and cilia. Functions as a protein kinase A-anchoring protein that scaffolds the cAMP-dependent protein kinase holoenzyme. May serve as a point of convergence for MAPK and PKA signaling in cilia. This is Radial spoke head protein 3 homolog A (Rsph3a) from Mus musculus (Mouse).